A 299-amino-acid chain; its full sequence is tRNA-cytidine(32) 2-sulfurtransferase (299 aa).

The short motif at 56 to 61 is the PP-loop motif element; it reads SGGKDS. 3 residues coordinate [4Fe-4S] cluster: Cys131, Cys134, and Cys222.

The protein belongs to the TtcA family. As to quaternary structure, homodimer. Mg(2+) serves as cofactor. Requires [4Fe-4S] cluster as cofactor.

The protein resides in the cytoplasm. The catalysed reaction is cytidine(32) in tRNA + S-sulfanyl-L-cysteinyl-[cysteine desulfurase] + AH2 + ATP = 2-thiocytidine(32) in tRNA + L-cysteinyl-[cysteine desulfurase] + A + AMP + diphosphate + H(+). The protein operates within tRNA modification. In terms of biological role, catalyzes the ATP-dependent 2-thiolation of cytidine in position 32 of tRNA, to form 2-thiocytidine (s(2)C32). The sulfur atoms are provided by the cysteine/cysteine desulfurase (IscS) system. This is tRNA-cytidine(32) 2-sulfurtransferase from Xylella fastidiosa (strain 9a5c).